A 159-amino-acid chain; its full sequence is Capsid protein (159 aa).

Ser2 is modified (N-acetylserine; by host).

Belongs to the virgaviridae capsid protein family.

It is found in the virion. In terms of biological role, capsid protein self-assembles to form rod-shaped virions about 18 nm in diameter with a central canal enclosing the viral genomic RNA. The sequence is that of Capsid protein (CP) from Nicotiana tabacum (Common tobacco).